The chain runs to 237 residues: Pyridoxal 5'-phosphate synthase subunit PdxS (237 aa).

The active-site Schiff-base intermediate with D-ribose 5-phosphate is the lysine 19. Position 91 (glycine 91) interacts with D-ribose 5-phosphate. D-glyceraldehyde 3-phosphate is bound at residue arginine 103. Residues glycine 157 and glycine 178–serine 179 each bind D-ribose 5-phosphate.

Belongs to the PdxS/SNZ family. In terms of assembly, in the presence of PdxT, forms a dodecamer of heterodimers.

The enzyme catalyses aldehydo-D-ribose 5-phosphate + D-glyceraldehyde 3-phosphate + L-glutamine = pyridoxal 5'-phosphate + L-glutamate + phosphate + 3 H2O + H(+). The protein operates within cofactor biosynthesis; pyridoxal 5'-phosphate biosynthesis. Its function is as follows. Catalyzes the formation of pyridoxal 5'-phosphate from ribose 5-phosphate (RBP), glyceraldehyde 3-phosphate (G3P) and ammonia. The ammonia is provided by the PdxT subunit. Can also use ribulose 5-phosphate and dihydroxyacetone phosphate as substrates, resulting from enzyme-catalyzed isomerization of RBP and G3P, respectively. This is Pyridoxal 5'-phosphate synthase subunit PdxS from Methanococcus vannielii.